The chain runs to 234 residues: Large ribosomal subunit protein bL25 (234 aa).

Residues 1–24 (MATVMELKATARPKSGKGAARAER) are disordered.

Belongs to the bacterial ribosomal protein bL25 family. CTC subfamily. In terms of assembly, part of the 50S ribosomal subunit; part of the 5S rRNA/L5/L18/L25 subcomplex. Contacts the 5S rRNA. Binds to the 5S rRNA independently of L5 and L18.

Its function is as follows. This is one of the proteins that binds to the 5S RNA in the ribosome where it forms part of the central protuberance. This is Large ribosomal subunit protein bL25 from Rhodopseudomonas palustris (strain BisB5).